We begin with the raw amino-acid sequence, 324 residues long: Lactonase drp35 (324 aa).

Residues Glu47, Ser109, Gly111, Asp129, Thr132, Tyr134, Asp137, Asn184, Asp235, and Ser236 each coordinate Ca(2+). Asp235 serves as the catalytic Proton donor.

The protein belongs to the SMP-30/CGR1 family. It depends on Ca(2+) as a cofactor.

Its subcellular location is the cytoplasm. Exhibits lactonase activity. Acts in cells with perturbed membrane integrity and is possibly related to the membrane homeostasis. In Staphylococcus aureus (strain bovine RF122 / ET3-1), this protein is Lactonase drp35 (drp35).